We begin with the raw amino-acid sequence, 272 residues long: Polar tube protein 2 (272 aa).

The first 21 residues, 1–21 (MLLLFTVVTLVSAAQVAPVTP), serve as a signal peptide directing secretion. Asparagine 134 carries N-linked (GlcNAc...) asparagine glycosylation. The interval 231–272 (RAIQKKEVKESSKDGEKSSTQNGEGTTDDEDGQQSPDGNGPE) is disordered. Residues 234 to 247 (QKKEVKESSKDGEK) are compositionally biased toward basic and acidic residues. Positions 263–272 (QQSPDGNGPE) are enriched in polar residues.

The protein resides in the spore polar tube. Involved in formation of a polar tube through which the infectious agent is passed on to the host cell. This chain is Polar tube protein 2 (PTP2), found in Encephalitozoon hellem (Microsporidian parasite).